Here is an 853-residue protein sequence, read N- to C-terminus: Leucine-rich repeat and death domain-containing protein 1 (853 aa).

A disordered region spans residues 1–78; that stretch reads MSEDGSNVEP…EEKNTGIPFS (78 aa). The span at 19–31 shows a compositional bias: acidic residues; sequence LEEPGSEISDLLD. Over residues 56–65 the composition is skewed to polar residues; the sequence is QSAASFTSQL. LRR repeat units follow at residues 133–157, 159–180, 183–204, 206–227, 229–251, 252–274, 275–297, 298–319, 321–342, 344–365, 367–388, 390–411, 413–435, 436–457, 459–481, 482–503, 505–527, 528–549, 551–573, 574–596, 597–618, 620–641, 646–668, 669–690, 692–713, and 715–736; these read MKSDNFTVNLDAKGLQEFPVDIVKV, YVKYLYLDKNQIKNFQGIDPGD, GLEILSLQENGLSSIPLEIQLF, NLKILNASYNEISQIPKELLQL, NMRQLLLNSNHIDTLPSGLEHLR, YLETLSLGKNMLTYIPDSLSSLK, NLRILNLEYNQLTIFSKSLCFLP, KLNSLNLTGNMIGSLPKEVREL, NLESLLMDHNKLTFLAVEIFQL, KIKELHLADNKLEAISPKIENF, ELRLLNLDKNLLQSIPKKISHC, NLESLSLSDNNIEELPKKIRKL, NLRQLHVNRNKMITMTEEISHLS, NIHILEFSGNQITHVPIEIKNC, KITRVELNYNNIMYFPVGLCALQ, SLDYLSFNGNYISEIPVDMSFS, QLLHLELNRNKLTVFSKHLCSLT, NLEYLDLAKNQIMTIPSCISAM, SLHVLILSDNKFESFPKELCSLK, NLRVLDISENKLQKIPLEISKLK, RIQKLNLSNNIFTNFPVELCQL, TLEELNISQTSGKKLTRLPEEV, QLKILNISNNAIKDIPKNIGELR, SLVSFYASNNQISSLPSSFLSL, VLQSLDLRGNNMTALPSGIYKL, and SLKEINFDDNPLMRPPMEICKG. The Death domain maps to 757-845; it reads LEKIFNIVAN…DIMDKITALN (89 aa).

In Mus musculus (Mouse), this protein is Leucine-rich repeat and death domain-containing protein 1 (Lrrd1).